The primary structure comprises 832 residues: Alpha-glucan phosphorylase, H isozyme (832 aa).

Lysine 678 bears the N6-(pyridoxal phosphate)lysine mark.

This sequence belongs to the glycogen phosphorylase family. Pyridoxal 5'-phosphate serves as cofactor.

The protein localises to the cytoplasm. The catalysed reaction is [(1-&gt;4)-alpha-D-glucosyl](n) + phosphate = [(1-&gt;4)-alpha-D-glucosyl](n-1) + alpha-D-glucose 1-phosphate. Phosphorylase is an important allosteric enzyme in carbohydrate metabolism. Enzymes from different sources differ in their regulatory mechanisms and in their natural substrates. However, all known phosphorylases share catalytic and structural properties. In Triticum aestivum (Wheat), this protein is Alpha-glucan phosphorylase, H isozyme.